Here is a 388-residue protein sequence, read N- to C-terminus: MTSSHAMNITPLAQLALLFSTLLLPGTQALLAPTTPDAGSALNLTFDPWTRTLTWACDTAAGNVTVTSCTVTSREAGIHRRVSPFGCRCWFRRMMALHHGVTLDVNGTVGGAAAHWRLSFVNEGAAGSGAENLTCEIRAARFLSCAWREGPAAPADVRYSLRVLNSTGHDVARCMADPGDDVITQCIANDLSLLGSEAYLVVTGRSGAGPVRFLDDVVATKALERLGPPRDVTASCNSSHCTVSWAPPSTWASLTARDFQFEVQWQSAEPGSTPRKVLVVEETRLAFPSPAPHGGHKVKVRAGDTRMKHWGEWSPAHPLEAEDTRVPGALLYAVTACAVLLCALALGVTCRRFEVTRRLFPPIPGIRDKVSDDVRVNPETLRKDLLQP.

An N-terminal signal peptide occupies residues 1 to 29 (MTSSHAMNITPLAQLALLFSTLLLPGTQA). At 30 to 327 (LLAPTTPDAG…PLEAEDTRVP (298 aa)) the chain is on the extracellular side. N-linked (GlcNAc...) asparagine glycans are attached at residues asparagine 43, asparagine 63, asparagine 106, asparagine 132, asparagine 165, and asparagine 237. The 97-residue stretch at 228–324 (PPRDVTASCN…PAHPLEAEDT (97 aa)) folds into the Fibronectin type-III domain. The short motif at 310–314 (WGEWS) is the WSXWS motif element. Residues 328 to 348 (GALLYAVTACAVLLCALALGV) form a helical membrane-spanning segment. The Cytoplasmic segment spans residues 349 to 388 (TCRRFEVTRRLFPPIPGIRDKVSDDVRVNPETLRKDLLQP). The short motif at 359-367 (LFPPIPGIR) is the Box 1 motif element.

The protein belongs to the type I cytokine receptor family. Type 5 subfamily. As to quaternary structure, heterodimer of an alpha and a beta subunit. The beta subunit is common to the IL3, IL5 and GM-CSF receptors. The signaling GM-CSF receptor complex is a dodecamer of two head-to-head hexamers of two alpha, two beta, and two ligand subunits.

Its subcellular location is the membrane. Low affinity receptor for granulocyte-macrophage colony-stimulating factor. Transduces a signal that results in the proliferation, differentiation, and functional activation of hematopoietic cells. This Mus musculus (Mouse) protein is Granulocyte-macrophage colony-stimulating factor receptor subunit alpha (Csf2ra).